We begin with the raw amino-acid sequence, 497 residues long: Glycerol kinase (497 aa).

Residue Thr-12 coordinates ADP. Residues Thr-12, Thr-13, and Ser-14 each coordinate ATP. Thr-12 contacts sn-glycerol 3-phosphate. Residue Arg-16 participates in ADP binding. Sn-glycerol 3-phosphate-binding residues include Arg-82, Glu-83, Tyr-134, and Asp-243. Glycerol is bound by residues Arg-82, Glu-83, Tyr-134, Asp-243, and Gln-244. ADP-binding residues include Thr-265 and Gly-308. ATP contacts are provided by Thr-265, Gly-308, Gln-312, and Gly-409. ADP contacts are provided by Gly-409 and Asn-413.

It belongs to the FGGY kinase family. Homotetramer and homodimer (in equilibrium).

The catalysed reaction is glycerol + ATP = sn-glycerol 3-phosphate + ADP + H(+). It participates in polyol metabolism; glycerol degradation via glycerol kinase pathway; sn-glycerol 3-phosphate from glycerol: step 1/1. With respect to regulation, activated by phosphorylation and inhibited by fructose 1,6-bisphosphate (FBP). In terms of biological role, key enzyme in the regulation of glycerol uptake and metabolism. Catalyzes the phosphorylation of glycerol to yield sn-glycerol 3-phosphate. The chain is Glycerol kinase from Thermoanaerobacter sp. (strain X514).